The sequence spans 129 residues: MTRFLILSAVLAGPALAGDTSPAQLIAGYEAAAGAPADAERGRALFLSTQTGGKPDTPSCTTCHGADVTRAGQTRTGKEIAPLAPSATPDRFTDSARVEKWLGRNCNSVIGRDCTPGEKADLLAWLAAQ.

The N-terminal stretch at 1–17 (MTRFLILSAVLAGPALA) is a signal peptide. Positions 60, 63, and 64 each coordinate heme c. The cysteines at positions 106 and 114 are disulfide-linked.

Post-translationally, binds 1 heme c group covalently per subunit.

High-spin cytochrome. Transiently bind oxygen during autoxidation, which occurs with a half-life of 3 minutes with a 4-fold excess of O(2). Also binds carbon monoxide, azide and cyanide. In Cereibacter sphaeroides (strain ATCC 17023 / DSM 158 / JCM 6121 / CCUG 31486 / LMG 2827 / NBRC 12203 / NCIMB 8253 / ATH 2.4.1.) (Rhodobacter sphaeroides), this protein is Cytochrome c-type protein SHP (shp).